A 308-amino-acid chain; its full sequence is 2-methylisocitrate lyase (308 aa).

Residue 51–53 (SGA) participates in substrate binding. The Mg(2+) site is built by aspartate 90 and aspartate 92. Residues 127–128 (CG), arginine 160, glutamate 190, 212–214 (NMT), arginine 243, and arginine 272 each bind substrate.

This sequence belongs to the isocitrate lyase/PEP mutase superfamily. Methylisocitrate lyase family. In terms of assembly, homotetramer; dimer of dimers. It depends on Mg(2+) as a cofactor.

It catalyses the reaction (2S,3R)-3-hydroxybutane-1,2,3-tricarboxylate = pyruvate + succinate. The protein operates within organic acid metabolism; propanoate degradation. In terms of biological role, involved in the catabolism of short chain fatty acids (SCFA) via the 2-methylcitrate cycle I (propionate degradation route). Catalyzes the thermodynamically favored C-C bond cleavage of (2R,3S)-2-methylisocitrate to yield pyruvate and succinate via an alpha-carboxy-carbanion intermediate. This is 2-methylisocitrate lyase from Aeropyrum pernix (strain ATCC 700893 / DSM 11879 / JCM 9820 / NBRC 100138 / K1).